The following is a 378-amino-acid chain: Lipoyl synthase, mitochondrial (378 aa).

Residues C97, C102, C108, C128, C132, C135, and S343 each contribute to the [4Fe-4S] cluster site. Residues 111–332 (GSDKSAATAT…RQRALDMGFL (222 aa)) form the Radical SAM core domain.

The protein belongs to the radical SAM superfamily. Lipoyl synthase family. The cofactor is [4Fe-4S] cluster.

It is found in the mitochondrion. It catalyses the reaction [[Fe-S] cluster scaffold protein carrying a second [4Fe-4S](2+) cluster] + N(6)-octanoyl-L-lysyl-[protein] + 2 oxidized [2Fe-2S]-[ferredoxin] + 2 S-adenosyl-L-methionine + 4 H(+) = [[Fe-S] cluster scaffold protein] + N(6)-[(R)-dihydrolipoyl]-L-lysyl-[protein] + 4 Fe(3+) + 2 hydrogen sulfide + 2 5'-deoxyadenosine + 2 L-methionine + 2 reduced [2Fe-2S]-[ferredoxin]. Its pathway is protein modification; protein lipoylation via endogenous pathway; protein N(6)-(lipoyl)lysine from octanoyl-[acyl-carrier-protein]: step 2/2. Catalyzes the radical-mediated insertion of two sulfur atoms into the C-6 and C-8 positions of the octanoyl moiety bound to the lipoyl domains of lipoate-dependent enzymes, thereby converting the octanoylated domains into lipoylated derivatives. The protein is Lipoyl synthase, mitochondrial of Phaeosphaeria nodorum (strain SN15 / ATCC MYA-4574 / FGSC 10173) (Glume blotch fungus).